The sequence spans 267 residues: Inositol-1-monophosphatase (267 aa).

Residues E66, D84, L86, and D87 each coordinate Mg(2+). A substrate-binding site is contributed by E66. Residues 86–89, R182, and D213 each bind substrate; that span reads LDGS. Residue D213 participates in Mg(2+) binding.

It belongs to the inositol monophosphatase superfamily. The cofactor is Mg(2+).

The enzyme catalyses a myo-inositol phosphate + H2O = myo-inositol + phosphate. The chain is Inositol-1-monophosphatase (suhB) from Aeropyrum pernix (strain ATCC 700893 / DSM 11879 / JCM 9820 / NBRC 100138 / K1).